Consider the following 255-residue polypeptide: 3-dehydroquinate dehydratase (255 aa).

3-dehydroquinate is bound by residues 46–48 and R82; that span reads EWR. The active-site Proton donor/acceptor is the H143. Residue K170 is the Schiff-base intermediate with substrate of the active site. Residues R213, S232, and Q236 each contribute to the 3-dehydroquinate site.

It belongs to the type-I 3-dehydroquinase family. In terms of assembly, homodimer.

The enzyme catalyses 3-dehydroquinate = 3-dehydroshikimate + H2O. It functions in the pathway metabolic intermediate biosynthesis; chorismate biosynthesis; chorismate from D-erythrose 4-phosphate and phosphoenolpyruvate: step 3/7. In terms of biological role, involved in the third step of the chorismate pathway, which leads to the biosynthesis of aromatic amino acids. Catalyzes the cis-dehydration of 3-dehydroquinate (DHQ) and introduces the first double bond of the aromatic ring to yield 3-dehydroshikimate. This is 3-dehydroquinate dehydratase from Bacillus subtilis (strain 168).